A 584-amino-acid chain; its full sequence is N(6)-adenosine-methyltransferase subunit METTL3 (584 aa).

Disordered regions lie at residues 1 to 65 and 162 to 221; these read MSDT…EHPP and KADD…SNKV. Residues 187–204 are compositionally biased toward polar residues; the sequence is RKSSVSLATASISQLTAS. A Nuclear localization signal motif is present at residues 213-220; sequence DKKGRSNK. S-adenosyl-L-methionine is bound by residues 381–382 and Asp-399; that span reads DI. Residues 400 to 414 form a gate loop 1 region; that stretch reads PPWDIHMELPYGTLT. Interaction with METTL14 regions lie at residues 454 to 458 and 468 to 484; these read DRVDE and QRIIRTGRTGHWLNHGK. An interphase loop region spans residues 466–483; it reads QLQRIIRTGRTGHWLNHG. A positively charged region required for RNA-binding region spans residues 469 to 482; it reads RIIRTGRTGHWLNH. Residues 511–519 form a gate loop 2 region; that stretch reads VRSTSHKPD. Residues Lys-517, 540 to 543, and 553 to 554 each bind S-adenosyl-L-methionine; these read RPHN and NQ.

It belongs to the MT-A70-like family. As to quaternary structure, heterodimer; heterodimerizes with mettl14 to form an antiparallel heterodimer that constitutes an active methyltransferase. Component of the WMM complex, a N6-methyltransferase complex composed of a catalytic subcomplex, named MAC, and of an associated subcomplex, named MACOM. The MAC subcomplex is composed of mettl3 and mettl14. As to expression, expressed in the hemato-vascular system: enriched in sorted endothelial cells and haemogenic endothelium.

The protein resides in the nucleus. The protein localises to the nucleus speckle. Its subcellular location is the cytoplasm. The catalysed reaction is an adenosine in mRNA + S-adenosyl-L-methionine = an N(6)-methyladenosine in mRNA + S-adenosyl-L-homocysteine + H(+). Its function is as follows. The METTL3-METTL14 heterodimer forms a N6-methyltransferase complex that methylates adenosine residues at the N(6) position of some RNAs and regulates various processes such as the circadian clock, differentiation of embryonic and hematopoietic stem cells, cortical neurogenesis, response to DNA damage, differentiation of T-cells and primary miRNA processing. In the heterodimer formed with mettl14, mettl3 constitutes the catalytic core. N6-methyladenosine (m6A), which takes place at the 5'-[AG]GAC-3' consensus sites of some mRNAs, plays a role in mRNA stability, processing and translation efficiency. M6A is also involved in hematopoietic stem cells specification: m6A methylation and subsequent destabilization of mRNAs, such as notch1a, leads to decreased Notch signaling, promoting endothelial to hematopoietic transition. M6A also takes place in other RNA molecules, such as primary miRNA (pri-miRNAs). Mediates methylation of pri-miRNAs. The chain is N(6)-adenosine-methyltransferase subunit METTL3 from Danio rerio (Zebrafish).